A 221-amino-acid polypeptide reads, in one-letter code: Probable septum site-determining protein MinC (221 aa).

The protein belongs to the MinC family. As to quaternary structure, interacts with MinD and FtsZ.

In terms of biological role, cell division inhibitor that blocks the formation of polar Z ring septums. Rapidly oscillates between the poles of the cell to destabilize FtsZ filaments that have formed before they mature into polar Z rings. Prevents FtsZ polymerization. This Shewanella loihica (strain ATCC BAA-1088 / PV-4) protein is Probable septum site-determining protein MinC.